The primary structure comprises 445 residues: Probable glycine dehydrogenase (decarboxylating) subunit 1 (445 aa).

Belongs to the GcvP family. N-terminal subunit subfamily. In terms of assembly, the glycine cleavage system is composed of four proteins: P, T, L and H. In this organism, the P 'protein' is a heterodimer of two subunits.

It catalyses the reaction N(6)-[(R)-lipoyl]-L-lysyl-[glycine-cleavage complex H protein] + glycine + H(+) = N(6)-[(R)-S(8)-aminomethyldihydrolipoyl]-L-lysyl-[glycine-cleavage complex H protein] + CO2. In terms of biological role, the glycine cleavage system catalyzes the degradation of glycine. The P protein binds the alpha-amino group of glycine through its pyridoxal phosphate cofactor; CO(2) is released and the remaining methylamine moiety is then transferred to the lipoamide cofactor of the H protein. The polypeptide is Probable glycine dehydrogenase (decarboxylating) subunit 1 (Anaeromyxobacter dehalogenans (strain 2CP-1 / ATCC BAA-258)).